A 75-amino-acid polypeptide reads, in one-letter code: Sec-independent protein translocase protein TatA (75 aa).

A helical transmembrane segment spans residues M1–G21. Residues K41–R75 are disordered.

It belongs to the TatA/E family. The Tat system comprises two distinct complexes: a TatABC complex, containing multiple copies of TatA, TatB and TatC subunits, and a separate TatA complex, containing only TatA subunits. Substrates initially bind to the TatABC complex, which probably triggers association of the separate TatA complex to form the active translocon.

The protein localises to the cell inner membrane. Part of the twin-arginine translocation (Tat) system that transports large folded proteins containing a characteristic twin-arginine motif in their signal peptide across membranes. TatA could form the protein-conducting channel of the Tat system. This is Sec-independent protein translocase protein TatA from Stenotrophomonas maltophilia (strain K279a).